Consider the following 120-residue polypeptide: Large ribosomal subunit protein uL18 (120 aa).

This sequence belongs to the universal ribosomal protein uL18 family. As to quaternary structure, part of the 50S ribosomal subunit; part of the 5S rRNA/L5/L18/L25 subcomplex. Contacts the 5S and 23S rRNAs.

Its function is as follows. This is one of the proteins that bind and probably mediate the attachment of the 5S RNA into the large ribosomal subunit, where it forms part of the central protuberance. The protein is Large ribosomal subunit protein uL18 of Paramagnetospirillum magneticum (strain ATCC 700264 / AMB-1) (Magnetospirillum magneticum).